We begin with the raw amino-acid sequence, 140 residues long: Nuclear receptor 2C2-associated protein (140 aa).

Belongs to the NR2C2AP family. In terms of assembly, interacts with NR2C2/TR4.

Its subcellular location is the nucleus. May act as a repressor of NR2C2-mediated transactivation by suppressing the binding between NR2C2/TR4 and the TR4-response element in target genes. The sequence is that of Nuclear receptor 2C2-associated protein (Nr2c2ap) from Mus musculus (Mouse).